The sequence spans 252 residues: N-acetylglucosaminyl-phosphatidylinositol de-N-acetylase (252 aa).

A helical transmembrane segment spans residues 2–22 (ELVGFLCVAVAVLTWGFLRVW). The Cytoplasmic portion of the chain corresponds to 23–252 (NSAERMRSPE…YMRINSLRFL (230 aa)).

It belongs to the PIGL family.

It is found in the endoplasmic reticulum membrane. The catalysed reaction is a 6-(N-acetyl-alpha-D-glucosaminyl)-1-(1,2-diacyl-sn-glycero-3-phospho)-1D-myo-inositol + H2O = a 6-(alpha-D-glucosaminyl)-1-(1,2-diacyl-sn-glycero-3-phospho)-1D-myo-inositol + acetate. It functions in the pathway glycolipid biosynthesis; glycosylphosphatidylinositol-anchor biosynthesis. Functionally, catalyzes the second step of glycosylphosphatidylinositol (GPI) biosynthesis, which is the de-N-acetylation of N-acetylglucosaminyl-phosphatidylinositol. In Mus musculus (Mouse), this protein is N-acetylglucosaminyl-phosphatidylinositol de-N-acetylase (Pigl).